Here is a 123-residue protein sequence, read N- to C-terminus: Small ribosomal subunit protein uS13 (123 aa).

Residues 103–123 (TRTNARTRKGPKKTVGVRRKK) are disordered. Residues 105–123 (TNARTRKGPKKTVGVRRKK) show a composition bias toward basic residues.

Belongs to the universal ribosomal protein uS13 family. As to quaternary structure, part of the 30S ribosomal subunit. Forms a loose heterodimer with protein S19. Forms two bridges to the 50S subunit in the 70S ribosome.

Functionally, located at the top of the head of the 30S subunit, it contacts several helices of the 16S rRNA. In the 70S ribosome it contacts the 23S rRNA (bridge B1a) and protein L5 of the 50S subunit (bridge B1b), connecting the 2 subunits; these bridges are implicated in subunit movement. Contacts the tRNAs in the A and P-sites. This is Small ribosomal subunit protein uS13 from Desulforudis audaxviator (strain MP104C).